Here is a 245-residue protein sequence, read N- to C-terminus: Ribonuclease P protein component 3 (245 aa).

The protein belongs to the eukaryotic/archaeal RNase P protein component 3 family. Consists of a catalytic RNA component and at least 4-5 protein subunits.

The protein resides in the cytoplasm. It catalyses the reaction Endonucleolytic cleavage of RNA, removing 5'-extranucleotides from tRNA precursor.. Its function is as follows. Part of ribonuclease P, a protein complex that generates mature tRNA molecules by cleaving their 5'-ends. The chain is Ribonuclease P protein component 3 from Methanothermobacter thermautotrophicus (strain ATCC 29096 / DSM 1053 / JCM 10044 / NBRC 100330 / Delta H) (Methanobacterium thermoautotrophicum).